We begin with the raw amino-acid sequence, 1658 residues long: Protein TIC 214 (1658 aa).

Transmembrane regions (helical) follow at residues 28 to 48 (FGLYYGFLAALPIGLSQILTI), 52 to 72 (LLGGNTGGTLAVSGSIMGQLI), 82 to 102 (IYVMLLKPHAITLLVLPYMLF), 130 to 150 (IFLDSFILSLLNPVILPSPVF), 165 to 185 (ISFVISSSFGWLGGYILFINL), and 199 to 219 (VNYPLIKSIINQIFSIIILAL).

Belongs to the TIC214 family. As to quaternary structure, part of the Tic complex.

It is found in the plastid. The protein resides in the chloroplast inner membrane. Involved in protein precursor import into chloroplasts. May be part of an intermediate translocation complex acting as a protein-conducting channel at the inner envelope. The protein is Protein TIC 214 of Huperzia lucidula (Shining clubmoss).